Here is a 466-residue protein sequence, read N- to C-terminus: Cell division protein FtsP (466 aa).

Positions 1–28 (MGNYSRRRFLQGSLAIVAGNVLPCAAMA) form a signal peptide, tat-type signal.

The protein belongs to the FtsP family. In terms of processing, predicted to be exported by the Tat system. The position of the signal peptide cleavage has not been experimentally proven.

It is found in the periplasm. Functionally, cell division protein that is required for growth during stress conditions. May be involved in protecting or stabilizing the divisomal assembly under conditions of stress. The sequence is that of Cell division protein FtsP from Gallibacterium anatis (strain UMN179) (Pasteurella anatis).